The primary structure comprises 318 residues: ATP phosphoribosyltransferase regulatory subunit (318 aa).

Belongs to the class-II aminoacyl-tRNA synthetase family. HisZ subfamily. Heteromultimer composed of HisG and HisZ subunits.

It is found in the cytoplasm. Its pathway is amino-acid biosynthesis; L-histidine biosynthesis; L-histidine from 5-phospho-alpha-D-ribose 1-diphosphate: step 1/9. Its function is as follows. Required for the first step of histidine biosynthesis. May allow the feedback regulation of ATP phosphoribosyltransferase activity by histidine. This is ATP phosphoribosyltransferase regulatory subunit from Lactococcus lactis subsp. cremoris (strain MG1363).